A 197-amino-acid chain; its full sequence is Xanthine phosphoribosyltransferase (197 aa).

Leucine 20 and asparagine 27 together coordinate xanthine. 128–132 (ANGQA) provides a ligand contact to 5-phospho-alpha-D-ribose 1-diphosphate. A xanthine-binding site is contributed by lysine 156.

This sequence belongs to the purine/pyrimidine phosphoribosyltransferase family. Xpt subfamily. In terms of assembly, homodimer.

It is found in the cytoplasm. It catalyses the reaction XMP + diphosphate = xanthine + 5-phospho-alpha-D-ribose 1-diphosphate. It functions in the pathway purine metabolism; XMP biosynthesis via salvage pathway; XMP from xanthine: step 1/1. Converts the preformed base xanthine, a product of nucleic acid breakdown, to xanthosine 5'-monophosphate (XMP), so it can be reused for RNA or DNA synthesis. This Bacillus cereus (strain ZK / E33L) protein is Xanthine phosphoribosyltransferase.